A 227-amino-acid chain; its full sequence is Ion-translocating oxidoreductase complex subunit E (227 aa).

Transmembrane regions (helical) follow at residues 34–56, 68–88, 91–111, 127–147, and 181–201; these read AINA…TIIS, IPIY…LLHA, FNLY…CIIV, FFDG…VGSI, and TIIL…LIAI.

It belongs to the NqrDE/RnfAE family. As to quaternary structure, the complex is composed of six subunits: RnfA, RnfB, RnfC, RnfD, RnfE and RnfG.

The protein resides in the cell inner membrane. Functionally, part of a membrane-bound complex that couples electron transfer with translocation of ions across the membrane. The protein is Ion-translocating oxidoreductase complex subunit E of Buchnera aphidicola subsp. Acyrthosiphon pisum (strain 5A).